The chain runs to 159 residues: Cathelicidin-5 (159 aa).

The N-terminal stretch at 1 to 29 (METQRASLSLGRWSLWLLLLGLALPSASA) is a signal peptide. Gln30 is modified (pyrrolidone carboxylic acid). The propeptide occupies 30–131 (QALSYREAVL…DITCAVPQSV (102 aa)). Cystine bridges form between Cys86/Cys97 and Cys108/Cys125.

It belongs to the cathelicidin family.

It is found in the secreted. Exerts a potent antimicrobial activity against Gram-negative and Gram-positive bacteria, including methicillin-resistant Staphylococcus aureus, and fungi. This chain is Cathelicidin-5 (CATHL5), found in Bos taurus (Bovine).